Here is a 261-residue protein sequence, read N- to C-terminus: 3beta-hydroxysteroid dehydrogenase 1 (261 aa).

Residues 65–66 (DV), N92, Y158, and K162 contribute to the NAD(+) site. The Proton acceptor role is filled by Y158.

The protein belongs to the short-chain dehydrogenases/reductases (SDR) family.

The enzyme catalyses 3-oxo-5beta-cholan-24-oate + NADH + H(+) = isolithocholate + NAD(+). It carries out the reaction 12alpha-hydroxy-3-oxo-5beta-cholan-24-oate + NADH + H(+) = isodeoxycholate + NAD(+). The catalysed reaction is 7alpha,12alpha-dihydroxy-3-oxo-5beta-cholan-24-oate + NADH + H(+) = isocholate + NAD(+). It catalyses the reaction 3-oxochenodeoxycholate + NADH + H(+) = isochenodeoxycholate + NAD(+). Its function is as follows. Involved in the modification of secondary bile acids into iso-bile acids (3beta-bile acids) via epimerization of the 3-OH group through a 3-oxo-intermediate. Catalyzes the reduction of 12-alpha-hydroxy-3-oxo-5-beta-cholan-24-oate (3-oxo-DCA) and 3-oxo-5-beta-cholan-24-oate (3-oxo-LCA) to yield isodeoxycholate (isoDCA) and isolithocholate (isoLCA), respectively. Is also able to catalyze the reduction of 3-dehydrocholate (3-oxo-CA or 7alpha,12alpha-dihydroxy-3-oxo-5beta-cholan-24-oate) and 7-alpha-hydroxy-3-oxo-5-beta-cholan-24-oate (3-oxo-CDCA), into isocholate (isoCA) and isochenodeoxycholate (isoCDCA), respectively. Prefers NADH to NADPH as cosubstrate. The conversion of the abundant bile acid deoxycholate (DCA) into isoDCA by the gut bacterium E.lenta favors the growth of the keystone commensal genus Bacteroides, since isoDCA is less cytotoxic than its parent compound, DCA; iso-bile acids have thus a potential role in modulating gut community composition. This is 3beta-hydroxysteroid dehydrogenase 1 from Eggerthella lenta (strain ATCC 25559 / DSM 2243 / CCUG 17323 / JCM 9979 / KCTC 3265 / NCTC 11813 / VPI 0255 / 1899 B) (Eubacterium lentum).